A 354-amino-acid chain; its full sequence is Soluble interferon alpha/beta receptor OPG204 (354 aa).

Positions 1-22 (MMKMTMKMMVHIYFVSLLLLLF) are cleaved as a signal peptide. Ig-like C2-type domains follow at residues 68-150 (IGEP…RSHV) and 158-240 (PEIY…IVVS). 2 disulfides stabilise this stretch: cysteine 76-cysteine 132 and cysteine 175-cysteine 224. Residues asparagine 120, asparagine 124, asparagine 185, asparagine 272, and asparagine 324 are each glycosylated (N-linked (GlcNAc...) asparagine; by host). One can recognise an Ig-like V-type domain in the interval 249–348 (PSQDHRFKLI…HNYYFEKTLT (100 aa)). Residues cysteine 275 and cysteine 336 are joined by a disulfide bond.

Belongs to the interleukin-1 receptor family. Interacts with host IFNA1.

The protein resides in the secreted. Its function is as follows. Counteracts the antiviral effects of host IFN-alpha/beta and key IFN-inducible proteins involved in viral RNA degradation suxh as host OAS1. Acts as a soluble IFN-alpha receptor and thus inhibits the interaction between host IFN-alpha and its receptor. This Homo sapiens (Human) protein is Soluble interferon alpha/beta receptor OPG204 (OPG204).